The sequence spans 467 residues: L-histidine transporter HutT (467 aa).

The next 13 helical transmembrane spans lie at 18–38, 39–59, 71–91, 99–119, 125–145, 155–175, 200–220, 245–265, 280–300, 334–354, 358–378, 402–422, and 429–449; these read FMAL…SAIQ, MAGP…FMVM, VAGS…GFIL, MVIV…FWFP, IWVL…VKVF, LKVG…AFGF, VGGL…IEII, ILLF…WPQI, GIGS…ISAI, WMTV…NYLI, VFLL…LMIL, FWPY…GVLG, and AALI…LLWC.

It belongs to the amino acid-polyamine-organocation (APC) superfamily. Amino acid transporter (AAT) (TC 2.A.3.1) family.

The protein localises to the cell inner membrane. It catalyses the reaction L-histidine(out) + n H(+)(out) = L-histidine(in) + n H(+)(in). Transport activity is inhibited by the proton ionophores carbonyl cyanide m-chlorophenyl hydrazine (CCCP) and 2,4-dinitrophenol (DNP), but not by valinomycin, nigericin and nonactin. Uptake is reduced in the presence of the sulfhydryl reagent N-ethylmaleimide (NEM). Uptake is not affected by arginine, lysine, proline or compounds structurally related to histidine such as imidazole, 3-amino-1,2,4-triazole and urocanate. Only 1,2,4-triazolyl-3-alanine reduces the rate of L-histidine uptake significantly. Functionally, major high-affinity histidine transporter. Binds and catalyzes the uptake of histidine into the cell. Functions as an histidine:proton symporter with high specificity for histidine. This chain is L-histidine transporter HutT, found in Pseudomonas putida (strain ATCC 47054 / DSM 6125 / CFBP 8728 / NCIMB 11950 / KT2440).